A 61-amino-acid chain; its full sequence is Large ribosomal subunit protein uL30 (61 aa).

Belongs to the universal ribosomal protein uL30 family. As to quaternary structure, part of the 50S ribosomal subunit.

The sequence is that of Large ribosomal subunit protein uL30 from Frankia alni (strain DSM 45986 / CECT 9034 / ACN14a).